We begin with the raw amino-acid sequence, 598 residues long: Probable translation initiation factor IF-2 (598 aa).

The tr-type G domain maps to 3–225; it reads LRCPIVSVLG…GLAQKFLEQK (223 aa). The segment at 12–19 is G1; that stretch reads GHVDHGKT. 12 to 19 lines the GTP pocket; it reads GHVDHGKT. The tract at residues 37-41 is G2; the sequence is GITQH. A G3 region spans residues 76–79; sequence DTPG. GTP contacts are provided by residues 76-80 and 130-133; these read DTPGH and NKLD. The G4 stretch occupies residues 130-133; the sequence is NKLD. The tract at residues 200–202 is G5; the sequence is SAM.

It belongs to the TRAFAC class translation factor GTPase superfamily. Classic translation factor GTPase family. IF-2 subfamily.

In terms of biological role, function in general translation initiation by promoting the binding of the formylmethionine-tRNA to ribosomes. Seems to function along with eIF-2. This chain is Probable translation initiation factor IF-2, found in Methanococcus maripaludis (strain C6 / ATCC BAA-1332).